We begin with the raw amino-acid sequence, 283 residues long: CUE domain-containing protein 2 (283 aa).

The segment covering 87 to 109 (LSGARNKENVQPQSSEVQGQVSI) has biased composition (polar residues). The interval 87–139 (LSGARNKENVQPQSSEVQGQVSISPEPLQRPEKLKEETMSSAGDTQDEAAGPE) is disordered. Serine 110 carries the phosphoserine modification. The span at 115 to 124 (QRPEKLKEET) shows a compositional bias: basic and acidic residues. Residues 141-184 (ELLPGVDVLLEVFPTCSVEQAQWVLAKARGDLEEAVQMLVEGKQ) form the CUE domain.

This sequence belongs to the CUEDC2 family. Interacts with PGR and ESR1.

The protein resides in the cytoplasm. It is found in the nucleus. Functionally, controls PGR and ESR1 protein levels through their targeting for ubiquitination and subsequent proteasomal degradation. The polypeptide is CUE domain-containing protein 2 (CUEDC2) (Bos taurus (Bovine)).